The primary structure comprises 297 residues: N-acetylmuramic acid 6-phosphate etherase (297 aa).

The SIS domain occupies 55–218; sequence AAAALKAGGR…STGAMVKLGK (164 aa). Glu83 acts as the Proton donor in catalysis. Glu114 is an active-site residue.

It belongs to the GCKR-like family. MurNAc-6-P etherase subfamily. In terms of assembly, homodimer.

It catalyses the reaction N-acetyl-D-muramate 6-phosphate + H2O = N-acetyl-D-glucosamine 6-phosphate + (R)-lactate. It participates in amino-sugar metabolism; 1,6-anhydro-N-acetylmuramate degradation. Its pathway is amino-sugar metabolism; N-acetylmuramate degradation. It functions in the pathway cell wall biogenesis; peptidoglycan recycling. In terms of biological role, specifically catalyzes the cleavage of the D-lactyl ether substituent of MurNAc 6-phosphate, producing GlcNAc 6-phosphate and D-lactate. Together with AnmK, is also required for the utilization of anhydro-N-acetylmuramic acid (anhMurNAc) either imported from the medium or derived from its own cell wall murein, and thus plays a role in cell wall recycling. This chain is N-acetylmuramic acid 6-phosphate etherase, found in Serratia proteamaculans (strain 568).